A 446-amino-acid chain; its full sequence is MSNFNFDFAENDFGPLAAKMRPTSLEQYFGQSHLIGEGKPLRKAIQAGHIYSMIFWGPPGTGKTTLAEIIAQRINAEVERISAVTSGIKEIREAIDRAKQNRLADRKTILFVDEVHRFNKSQQDAFLPHIEDGTVIFIGATTENPSFELNNALLSRARVYVLKSLTTAEIEQVLQQAVEDPKRGLGKERLILEENLLQVLAEYVNGDARLALNCLELMVDMADETENGKKIDRTLLKEVLGERQARFDKQGDRFYDLISALHKSVRGSAPDAALYWYARILTAGGDPLYVARRLLAIASEDVGNADPRAMQVALAAWDCFSRVGAYEGERAIAQAIIYLSVAPKSNAVYTAFNTAKQQAKDLPDYDVPPHLRNAPTNLMKELGYGTEYRYAHDEPNAYAAGENYFPPELKDTQYYFPTNRGMEIQIKEKLERLREQDKSAVKKRYK.

ATP is bound at residue 57–64; that stretch reads GPPGTGKT.

Belongs to the AAA ATPase family. RarA/MGS1/WRNIP1 subfamily.

Functionally, DNA-dependent ATPase that plays important roles in cellular responses to stalled DNA replication processes. This is Replication-associated recombination protein A (rarA) from Haemophilus influenzae (strain ATCC 51907 / DSM 11121 / KW20 / Rd).